A 180-amino-acid chain; its full sequence is MAEDDMCSLFFKLKVEDVTCSDDPEKHMKNASNERKPLIEPVENQLMDIDDEGGSVDHGLLYLYVDCRTMMCCFHRGSLPYNWMQGALLTNLPPYQHDVTLDEVNRGLKQALGFFGYADPMRTPYFTAFSFPGRVIKLNEQMELTSTKGKCLKFDLYASTHLRFKPDELVRHGECKFAIG.

In terms of biological role, hydrolyzes cytokinin glucosides thus liberating free cytokinins. This Linaria vulgaris (Toadflax) protein is Cytokinin-beta-glucosidase 2 (ROLC2).